The primary structure comprises 157 residues: Protein FAM162B (157 aa).

Residues 104 to 123 (ACYIMIGLTIVACFAVIVSA) traverse the membrane as a helical segment.

It belongs to the UPF0389 family.

Its subcellular location is the membrane. The protein is Protein FAM162B (Fam162b) of Mus musculus (Mouse).